Consider the following 295-residue polypeptide: Protease HtpX (295 aa).

A run of 2 helical transmembrane segments spans residues 4-24 (ILLF…TLSL) and 41-61 (SSLL…SLFI). Position 147 (H147) interacts with Zn(2+). The active site involves E148. Position 151 (H151) interacts with Zn(2+). A run of 2 helical transmembrane segments spans residues 158–178 (VTLA…ARII) and 199–219 (VATI…VMWF). E224 serves as a coordination point for Zn(2+).

This sequence belongs to the peptidase M48B family. Zn(2+) is required as a cofactor.

It localises to the cell inner membrane. The chain is Protease HtpX from Pseudomonas putida (strain GB-1).